A 78-amino-acid chain; its full sequence is Acyl carrier protein (78 aa).

The Carrier domain occupies 1-76; sequence MSVAEKVKEI…DAISFIEKKK (76 aa). An O-(pantetheine 4'-phosphoryl)serine modification is found at Ser-36.

Belongs to the acyl carrier protein (ACP) family. 4'-phosphopantetheine is transferred from CoA to a specific serine of apo-ACP by AcpS. This modification is essential for activity because fatty acids are bound in thioester linkage to the sulfhydryl of the prosthetic group.

Its subcellular location is the cytoplasm. The protein operates within lipid metabolism; fatty acid biosynthesis. Functionally, carrier of the growing fatty acid chain in fatty acid biosynthesis. In Solidesulfovibrio magneticus (strain ATCC 700980 / DSM 13731 / RS-1) (Desulfovibrio magneticus), this protein is Acyl carrier protein.